A 585-amino-acid polypeptide reads, in one-letter code: Type IV pilus assembly ATPase TfpB (585 aa).

Residue glycine 346 to threonine 351 participates in ATP binding. Zn(2+) is bound by residues cysteine 476, cysteine 479, cysteine 511, and cysteine 514.

This sequence belongs to the GSP E family.

Its subcellular location is the cytoplasm. ATPase component of the type IV pilus (T4P). Acts as a molecular motor to provide the energy that is required for biogenesis of the pilus and the extrusion of substrates generated in the cytoplasm. TfpB is required for optimal T4P extension and, consequently, efficient natural transformation. May play a role in initiating T4P extension. This is Type IV pilus assembly ATPase TfpB from Acinetobacter baylyi (strain ATCC 33305 / BD413 / ADP1).